Consider the following 123-residue polypeptide: Large ribosomal subunit protein uL18 (123 aa).

This sequence belongs to the universal ribosomal protein uL18 family. As to quaternary structure, part of the 50S ribosomal subunit; part of the 5S rRNA/L5/L18/L25 subcomplex. Contacts the 5S and 23S rRNAs.

Functionally, this is one of the proteins that bind and probably mediate the attachment of the 5S RNA into the large ribosomal subunit, where it forms part of the central protuberance. The protein is Large ribosomal subunit protein uL18 of Chlamydia pneumoniae (Chlamydophila pneumoniae).